A 181-amino-acid polypeptide reads, in one-letter code: Endoribonuclease YbeY (181 aa).

His-115, His-119, and His-125 together coordinate Zn(2+).

Belongs to the endoribonuclease YbeY family. It depends on Zn(2+) as a cofactor.

It is found in the cytoplasm. Its function is as follows. Single strand-specific metallo-endoribonuclease involved in late-stage 70S ribosome quality control and in maturation of the 3' terminus of the 16S rRNA. The polypeptide is Endoribonuclease YbeY (Bifidobacterium animalis subsp. lactis (strain AD011)).